Consider the following 683-residue polypeptide: Methionine--tRNA ligase (683 aa).

A 'HIGH' region motif is present at residues 15–25 (PYANGPIHLGH). 4 residues coordinate Zn(2+): Cys-146, Cys-149, Cys-159, and Cys-162. Positions 332–336 (KMSKS) match the 'KMSKS' region motif. Lys-335 provides a ligand contact to ATP. One can recognise a tRNA-binding domain in the interval 582 to 683 (DFAKIDLRIA…EGALPGMRVK (102 aa)).

Belongs to the class-I aminoacyl-tRNA synthetase family. MetG type 1 subfamily. In terms of assembly, homodimer. Zn(2+) is required as a cofactor.

Its subcellular location is the cytoplasm. It catalyses the reaction tRNA(Met) + L-methionine + ATP = L-methionyl-tRNA(Met) + AMP + diphosphate. Is required not only for elongation of protein synthesis but also for the initiation of all mRNA translation through initiator tRNA(fMet) aminoacylation. The protein is Methionine--tRNA ligase of Shewanella frigidimarina (strain NCIMB 400).